Reading from the N-terminus, the 211-residue chain is Phosphoserine phosphatase 1 (211 aa).

The Tele-phosphohistidine intermediate role is filled by His-9. His-150 is a catalytic residue.

The protein belongs to the histidine phosphatase superfamily. Metal-independent phosphoserine phosphatase family. In terms of assembly, homodimer. Can also form a heterodimer with PspB.

The enzyme catalyses O-phospho-L-serine + H2O = L-serine + phosphate. The catalysed reaction is O-phospho-D-serine + H2O = D-serine + phosphate. It participates in amino-acid biosynthesis; L-serine biosynthesis; L-serine from 3-phospho-D-glycerate: step 3/3. Activity is not inhibited by EDTA in vitro, nor enhanced by the addition of Mg(2+). Functionally, catalyzes the dephosphorylation of L-phosphoserine to serine and inorganic phosphate. Is poorly or not active toward D-phosphoserine, DL-phosphothreonine, 3-phosphoglycerate, para-nitrophenylphosphate, and fructose-6-phosphate. Does not display phosphoglycerate mutase activity. This is Phosphoserine phosphatase 1 (pspA) from Hydrogenobacter thermophilus (strain DSM 6534 / IAM 12695 / TK-6).